Consider the following 308-residue polypeptide: Olfactory receptor 2T6 (308 aa).

At 1–28 (MNENNETLTRGFTLMGLFTHNKCSGFFF) the chain is on the extracellular side. N-linked (GlcNAc...) asparagine glycosylation is present at asparagine 5. The chain crosses the membrane as a helical span at residues 29-49 (GVICAVFFMAMIANGVMIFLI). Residues 50 to 57 (NIDPHLHT) lie on the Cytoplasmic side of the membrane. A helical transmembrane segment spans residues 58–78 (PMYFLLSHLSVIDTLYISTIV). Over 79-98 (PKMLVDYLMGEGTISFIACT) the chain is Extracellular. Residues cysteine 97 and cysteine 179 are joined by a disulfide bond. Residues 99 to 119 (AQCFLYMGFMGAEFFLLGLMA) form a helical membrane-spanning segment. Over 120-145 (YDRYVAICNPLRYPVLISWRVCWMIL) the chain is Cytoplasmic. Residues 146 to 166 (ASSWFGGALDSFLLTPITMSL) traverse the membrane as a helical segment. The Extracellular portion of the chain corresponds to 167–203 (PFCASHQINHFFCEAPTMLRLACGDKTTYETVMYVCC). The helical transmembrane segment at 204 to 224 (VAMLLIPFSVVTASYTRILIT) threads the bilayer. The Cytoplasmic portion of the chain corresponds to 225–236 (VHQMTSAEGRKK). A helical membrane pass occupies residues 237 to 257 (AFATCSSHMMVVTLFYGAALY). Over 258-271 (TYTLPQSYHTPIKD) the chain is Extracellular. The chain crosses the membrane as a helical span at residues 272 to 292 (KVFSAFYTILTPLLNPLIYSL). At 293-308 (RNRDVMGALKRVVARC) the chain is on the cytoplasmic side.

Belongs to the G-protein coupled receptor 1 family.

The protein resides in the cell membrane. Functionally, odorant receptor. This Homo sapiens (Human) protein is Olfactory receptor 2T6 (OR2T6).